Here is a 181-residue protein sequence, read N- to C-terminus: Shikimate kinase (181 aa).

17-22 (GVGKTT) contributes to the ATP binding site. Mg(2+) is bound at residue T21. Substrate-binding residues include D39, R63, and G85. R122 is an ATP binding site. R141 contributes to the substrate binding site.

Belongs to the shikimate kinase family. In terms of assembly, monomer. The cofactor is Mg(2+).

The protein resides in the cytoplasm. It catalyses the reaction shikimate + ATP = 3-phosphoshikimate + ADP + H(+). The protein operates within metabolic intermediate biosynthesis; chorismate biosynthesis; chorismate from D-erythrose 4-phosphate and phosphoenolpyruvate: step 5/7. Functionally, catalyzes the specific phosphorylation of the 3-hydroxyl group of shikimic acid using ATP as a cosubstrate. The polypeptide is Shikimate kinase (Nostoc punctiforme (strain ATCC 29133 / PCC 73102)).